We begin with the raw amino-acid sequence, 337 residues long: D-alanine--D-alanine ligase (337 aa).

The 207-residue stretch at 124–330 (KMWFSALGIP…FTEYLSLVIN (207 aa)) folds into the ATP-grasp domain. Residue 154–209 (ALANWGSIFIKAASQGSSVGCYKVDDSSKVAQVLKDAFGYAPYVVVEKTIKARELE) coordinates ATP. Mg(2+)-binding residues include D284, E297, and N299.

The protein belongs to the D-alanine--D-alanine ligase family. Mg(2+) is required as a cofactor. It depends on Mn(2+) as a cofactor.

Its subcellular location is the cytoplasm. It catalyses the reaction 2 D-alanine + ATP = D-alanyl-D-alanine + ADP + phosphate + H(+). The protein operates within cell wall biogenesis; peptidoglycan biosynthesis. Its function is as follows. Cell wall formation. The chain is D-alanine--D-alanine ligase from Shewanella sp. (strain W3-18-1).